The following is a 230-amino-acid chain: Interleukin-22 receptor subunit alpha-2 (230 aa).

An N-terminal signal peptide occupies residues 1–20 (MMPKHCLLGLLIILLSSATE). 2 Fibronectin type-III domains span residues 29–128 (TPQK…TKLD) and 129–230 (PPVV…VHIP). Disulfide bonds link cysteine 77–cysteine 85 and cysteine 205–cysteine 226.

Belongs to the type II cytokine receptor family. Highly expressed in lymph nodes and at lower levels in lung, spleen, and thymus. Not expressed in kidney, liver and heart.

The protein resides in the secreted. In terms of biological role, receptor for IL22. Binds to IL22, prevents interaction with the functional IL-22R complex and blocks the activity of IL22 (in vitro). May play an important role as an IL22 antagonist in the regulation of inflammatory responses. The sequence is that of Interleukin-22 receptor subunit alpha-2 (Il22ra2) from Mus musculus (Mouse).